Consider the following 123-residue polypeptide: Putative membrane protein insertion efficiency factor (123 aa).

The disordered stretch occupies residues 1–23; the sequence is MGSCGGKHTGKGAPKPYSRNFTD.

The protein belongs to the UPF0161 family.

The protein localises to the cell inner membrane. Could be involved in insertion of integral membrane proteins into the membrane. This is Putative membrane protein insertion efficiency factor from Brucella ovis (strain ATCC 25840 / 63/290 / NCTC 10512).